The chain runs to 107 residues: V-type proton ATPase subunit G (107 aa).

The protein belongs to the V-ATPase G subunit family. As to quaternary structure, V-ATPase is a heteromultimeric enzyme composed of a peripheral catalytic V1 complex (components A to H) attached to an integral membrane V0 proton pore complex (components: a, c, c', c'' and d).

In terms of biological role, catalytic subunit of the peripheral V1 complex of vacuolar ATPase (V-ATPase). V-ATPase is responsible for acidifying a variety of intracellular compartments in eukaryotic cells. The protein is V-type proton ATPase subunit G (atp6v1g) of Dictyostelium discoideum (Social amoeba).